The chain runs to 397 residues: Enoyl-[acyl-carrier-protein] reductase [NADH] (397 aa).

Residues Gly48 to Tyr53, Phe74 to Glu75, Asp111 to Ala112, and Val139 to Ala140 contribute to the NAD(+) site. A substrate-binding site is contributed by Tyr225. Tyr235 acts as the Proton donor in catalysis. NAD(+) is bound by residues Lys244 and Val273–Thr275.

It belongs to the TER reductase family. As to quaternary structure, monomer.

It carries out the reaction a 2,3-saturated acyl-[ACP] + NAD(+) = a (2E)-enoyl-[ACP] + NADH + H(+). Its pathway is lipid metabolism; fatty acid biosynthesis. Involved in the final reduction of the elongation cycle of fatty acid synthesis (FAS II). Catalyzes the reduction of a carbon-carbon double bond in an enoyl moiety that is covalently linked to an acyl carrier protein (ACP). This is Enoyl-[acyl-carrier-protein] reductase [NADH] from Burkholderia pseudomallei (strain 668).